The primary structure comprises 598 residues: Nuclear receptor subfamily 4 group A member 2 (598 aa).

The segment at 1-22 (MPCVQAQYGSSPQGASPASQSY) is disordered. Low complexity predominate over residues 8–22 (YGSSPQGASPASQSY). Residues 260 to 335 (EGLCAVCGDN…VGMVKEVVRT (76 aa)) constitute a DNA-binding region (nuclear receptor). NR C4-type zinc fingers lie at residues 263-283 (CAVCGDNAACQHYGVRTCEGC) and 299-323 (CLANKNCPVDKRRRNRCQYCRFQKC). The Bipartite nuclear localization signal (NLS1) signature appears at 287 to 314 (FKRTVQKNAKYVCLANKNCPVDKRRRNR). The tract at residues 337-361 (SLKGRRGRLPSKPKSPQDPSPPSPP) is disordered. Residues 338–350 (LKGRRGRLPSKPK) carry the Nuclear localization signal (NLS1) motif. The segment covering 352 to 361 (PQDPSPPSPP) has biased composition (pro residues). The NR LBD domain maps to 360–595 (PPVSLISALV…AIIDKLFLDT (236 aa)). A nuclear export sequence (NES1) motif is present at residues 443-452 (FLELFVLRLA). Positions 568–577 (QGLQRIFYLK) match the nuclear export sequence (NES2) motif.

The protein belongs to the nuclear hormone receptor family. NR4 subfamily. As to quaternary structure, interacts with SFPQ, NCOR2, SIN3A and HADC1. The interaction with NCOR2 increases in the absence of PITX3. Interacts with PER2. In terms of tissue distribution, brain.

Its subcellular location is the cytoplasm. The protein localises to the nucleus. Functionally, transcriptional regulator which is important for the differentiation and maintenance of meso-diencephalic dopaminergic (mdDA) neurons during development. It is crucial for expression of a set of genes such as SLC6A3, SLC18A2, TH and DRD2 which are essential for development of mdDA neurons. The sequence is that of Nuclear receptor subfamily 4 group A member 2 (Nr4a2) from Mus musculus (Mouse).